Here is a 938-residue protein sequence, read N- to C-terminus: Glutamate receptor 3.1 (938 aa).

An N-terminal signal peptide occupies residues 1 to 20 (MKFIFYLFSIFCCLCSCAQS). The Extracellular portion of the chain corresponds to 21 to 588 (QNISGRPDAV…GGWAFLQPFT (568 aa)). Residues asparagine 22, asparagine 39, asparagine 59, asparagine 340, asparagine 418, asparagine 436, and asparagine 551 are each glycosylated (N-linked (GlcNAc...) asparagine). A helical membrane pass occupies residues 589–609 (IKMWTVTGLFFLIIGTVVWML). The Cytoplasmic segment spans residues 610–618 (EHRINDEFR). The helical transmembrane segment at 619-639 (GPPAKQLITVFWFSFSTLFFA) threads the bilayer. Residues 640-650 (HREDTRSTLGR) lie on the Cytoplasmic side of the membrane. Residues 651–671 (FVIIIWLFVVLIIQSSYTASL) form a helical membrane-spanning segment. Over 672–830 (TSILTVQQLT…ELDQDPDRLD (159 aa)) the chain is Extracellular. A helical membrane pass occupies residues 831–851 (VYSFSALFLICGLACIFALAI). The Cytoplasmic portion of the chain corresponds to 852-938 (HACNLFYQYS…SGSGSTTASC (87 aa)). The segment at 906–938 (AAKEKASGLGGSGGSMSGVSFTSSGSGSTTASC) is disordered. A compositionally biased stretch (low complexity) spans 922–938 (SGVSFTSSGSGSTTASC).

It belongs to the glutamate-gated ion channel (TC 1.A.10.1) family. As to quaternary structure, may form homomultimers. As to expression, expressed at low levels in roots and leaves.

The protein resides in the membrane. Glutamate-gated receptor that probably acts as a non-selective cation channel. Involved in root development. May regulate cell proliferation and cell death in the root apex. The polypeptide is Glutamate receptor 3.1 (GLR3.1) (Oryza sativa subsp. japonica (Rice)).